A 119-amino-acid chain; its full sequence is Ribonuclease P protein component (119 aa).

Belongs to the RnpA family. Consists of a catalytic RNA component (M1 or rnpB) and a protein subunit.

It catalyses the reaction Endonucleolytic cleavage of RNA, removing 5'-extranucleotides from tRNA precursor.. Functionally, RNaseP catalyzes the removal of the 5'-leader sequence from pre-tRNA to produce the mature 5'-terminus. It can also cleave other RNA substrates such as 4.5S RNA. The protein component plays an auxiliary but essential role in vivo by binding to the 5'-leader sequence and broadening the substrate specificity of the ribozyme. The polypeptide is Ribonuclease P protein component (Streptococcus mutans serotype c (strain ATCC 700610 / UA159)).